The primary structure comprises 453 residues: Putative dipeptidase UREG_03382 (453 aa).

The tract at residues 1–33 (MSTRDHVKQSPMPVQEGYPRSSKEFSPPSSRSR) is disordered. Residues 41-63 (LTMSLLIAAGAATFSKYIFPLGS) traverse the membrane as a helical segment. The Zn(2+) site is built by His-95, Asp-97, and Glu-208. Cysteines 147 and 223 form a disulfide. His-221 contacts substrate. Positions 265 and 286 each coordinate Zn(2+). Substrate-binding residues include Arg-297 and Asp-357. 2 N-linked (GlcNAc...) asparagine glycosylation sites follow: Asn-370 and Asn-443.

It belongs to the metallo-dependent hydrolases superfamily. Peptidase M19 family. Requires Zn(2+) as cofactor.

The protein resides in the membrane. It carries out the reaction an L-aminoacyl-L-amino acid + H2O = 2 an L-alpha-amino acid. In terms of biological role, hydrolyzes a wide range of dipeptides. The protein is Putative dipeptidase UREG_03382 of Uncinocarpus reesii (strain UAMH 1704).